We begin with the raw amino-acid sequence, 311 residues long: MQAPPPEHCPGVESEQAGRVSACAGCPNQSICSDPTKKLEDPGKALVAAAMKDVKHKLLILSGKGGVGKSTVTTLLTRYLARSCPDNNFGVLDIDICGPSQPRLLGALGENVHQSGSGWSPVGIDDNVCLMSIGFLLSSVDDAIIWRGPKKNGMIRQFLSEVDWGNLDLLLLDTPPGTSDEHLSVCTYLRDDSAPKDSLSAIIVTTPQEVALLDVRKEINFCRKQRIPILGVIENMSSFRCGHCGNSSDIFPAKTGGAAAMCAEMEVPLLGSLPLDPRVTRACDAGEDITAMKSETTDALAAICSKIMSSF.

Residues cysteine 9, cysteine 23, cysteine 26, and cysteine 32 each contribute to the [4Fe-4S] cluster site. Residue 63 to 70 (GKGGVGKS) participates in ATP binding. Cysteine 241 and cysteine 244 together coordinate [4Fe-4S] cluster.

Belongs to the Mrp/NBP35 ATP-binding proteins family. NUBP1/NBP35 subfamily. Heterotetramer of 2 Nubp1 and 2 Nubp2 chains. [4Fe-4S] cluster is required as a cofactor.

Its subcellular location is the cytoplasm. Its function is as follows. Component of the cytosolic iron-sulfur (Fe/S) protein assembly (CIA) machinery. Required for maturation of extramitochondrial Fe-S proteins. The Nubp1-Nubp2 heterotetramer forms a Fe-S scaffold complex, mediating the de novo assembly of an Fe-S cluster and its transfer to target apoproteins. The sequence is that of Cytosolic Fe-S cluster assembly factor Nubp1 homolog from Drosophila grimshawi (Hawaiian fruit fly).